Consider the following 289-residue polypeptide: Oxaloacetate decarboxylase 1 (289 aa).

Substrate is bound at residue Ser50. Mg(2+) is bound at residue Asp88. The substrate site is built by Arg159 and His235.

This sequence belongs to the isocitrate lyase/PEP mutase superfamily. Oxaloacetate decarboxylase family. Homotetramer; dimer of dimers. Mg(2+) serves as cofactor.

The enzyme catalyses oxaloacetate + H(+) = pyruvate + CO2. Catalyzes the decarboxylation of oxaloacetate into pyruvate. Seems to play a role in maintaining cellular concentrations of bicarbonate and pyruvate. The chain is Oxaloacetate decarboxylase 1 from Pseudomonas putida (strain W619).